The sequence spans 792 residues: Xaa-Pro dipeptidyl-peptidase (792 aa).

Active-site charge relay system residues include serine 363, aspartate 482, and histidine 513.

The protein belongs to the peptidase S15 family. As to quaternary structure, homodimer.

It localises to the cytoplasm. The catalysed reaction is Hydrolyzes Xaa-Pro-|- bonds to release unblocked, N-terminal dipeptides from substrates including Ala-Pro-|-p-nitroanilide and (sequentially) Tyr-Pro-|-Phe-Pro-|-Gly-Pro-|-Ile.. Removes N-terminal dipeptides sequentially from polypeptides having unsubstituted N-termini provided that the penultimate residue is proline. The sequence is that of Xaa-Pro dipeptidyl-peptidase from Lactobacillus delbrueckii subsp. bulgaricus (strain ATCC BAA-365 / Lb-18).